Reading from the N-terminus, the 586-residue chain is Phosphomethylpyrimidine synthase (586 aa).

The segment at 1–33 (MKQSVSAEQIELKSSLPGSKKVYVDGPREGMKV) is disordered. Over residues 22 to 33 (VYVDGPREGMKV) the composition is skewed to basic and acidic residues. Residues asparagine 193, methionine 222, tyrosine 251, histidine 287, 307 to 309 (SRG), 348 to 351 (DGLR), and glutamate 387 contribute to the substrate site. Zn(2+) is bound at residue histidine 391. Tyrosine 414 lines the substrate pocket. Histidine 455 serves as a coordination point for Zn(2+). Positions 535, 538, and 543 each coordinate [4Fe-4S] cluster.

It belongs to the ThiC family. It depends on [4Fe-4S] cluster as a cofactor.

The catalysed reaction is 5-amino-1-(5-phospho-beta-D-ribosyl)imidazole + S-adenosyl-L-methionine = 4-amino-2-methyl-5-(phosphooxymethyl)pyrimidine + CO + 5'-deoxyadenosine + formate + L-methionine + 3 H(+). Its pathway is cofactor biosynthesis; thiamine diphosphate biosynthesis. Catalyzes the synthesis of the hydroxymethylpyrimidine phosphate (HMP-P) moiety of thiamine from aminoimidazole ribotide (AIR) in a radical S-adenosyl-L-methionine (SAM)-dependent reaction. The chain is Phosphomethylpyrimidine synthase from Bacillus cereus (strain G9842).